We begin with the raw amino-acid sequence, 152 residues long: Large ribosomal subunit protein bL9 (152 aa).

It belongs to the bacterial ribosomal protein bL9 family.

Its function is as follows. Binds to the 23S rRNA. In Prochlorococcus marinus (strain NATL1A), this protein is Large ribosomal subunit protein bL9.